A 270-amino-acid polypeptide reads, in one-letter code: Putative pyruvate, phosphate dikinase regulatory protein (270 aa).

148-155 (GISRTSKT) serves as a coordination point for ADP.

Belongs to the pyruvate, phosphate/water dikinase regulatory protein family. PDRP subfamily.

The enzyme catalyses N(tele)-phospho-L-histidyl/L-threonyl-[pyruvate, phosphate dikinase] + ADP = N(tele)-phospho-L-histidyl/O-phospho-L-threonyl-[pyruvate, phosphate dikinase] + AMP + H(+). It catalyses the reaction N(tele)-phospho-L-histidyl/O-phospho-L-threonyl-[pyruvate, phosphate dikinase] + phosphate + H(+) = N(tele)-phospho-L-histidyl/L-threonyl-[pyruvate, phosphate dikinase] + diphosphate. Its function is as follows. Bifunctional serine/threonine kinase and phosphorylase involved in the regulation of the pyruvate, phosphate dikinase (PPDK) by catalyzing its phosphorylation/dephosphorylation. The sequence is that of Putative pyruvate, phosphate dikinase regulatory protein from Bacillus cereus (strain 03BB102).